Consider the following 141-residue polypeptide: SsrA-binding protein (141 aa).

Belongs to the SmpB family.

Its subcellular location is the cytoplasm. Functionally, required for rescue of stalled ribosomes mediated by trans-translation. Binds to transfer-messenger RNA (tmRNA), required for stable association of tmRNA with ribosomes. tmRNA and SmpB together mimic tRNA shape, replacing the anticodon stem-loop with SmpB. tmRNA is encoded by the ssrA gene; the 2 termini fold to resemble tRNA(Ala) and it encodes a 'tag peptide', a short internal open reading frame. During trans-translation Ala-aminoacylated tmRNA acts like a tRNA, entering the A-site of stalled ribosomes, displacing the stalled mRNA. The ribosome then switches to translate the ORF on the tmRNA; the nascent peptide is terminated with the 'tag peptide' encoded by the tmRNA and targeted for degradation. The ribosome is freed to recommence translation, which seems to be the essential function of trans-translation. The protein is SsrA-binding protein of Ureaplasma parvum serovar 3 (strain ATCC 27815 / 27 / NCTC 11736).